The following is a 139-amino-acid chain: ATP synthase epsilon chain (139 aa).

It belongs to the ATPase epsilon chain family. F-type ATPases have 2 components, CF(1) - the catalytic core - and CF(0) - the membrane proton channel. CF(1) has five subunits: alpha(3), beta(3), gamma(1), delta(1), epsilon(1). CF(0) has three main subunits: a, b and c.

It localises to the cell inner membrane. In terms of biological role, produces ATP from ADP in the presence of a proton gradient across the membrane. The protein is ATP synthase epsilon chain of Pseudomonas entomophila (strain L48).